The following is a 371-amino-acid chain: Glutamate 5-kinase (371 aa).

Lys-11 is an ATP binding site. The substrate site is built by Ser-52, Asp-139, and Asn-151. Residues 171–172 and 213–219 contribute to the ATP site; these read TD and TGGMATK. The 79-residue stretch at 278 to 356 folds into the PUA domain; the sequence is EGSLTLDEGA…AEIPRILGYE (79 aa).

This sequence belongs to the glutamate 5-kinase family.

The protein resides in the cytoplasm. The enzyme catalyses L-glutamate + ATP = L-glutamyl 5-phosphate + ADP. Its pathway is amino-acid biosynthesis; L-proline biosynthesis; L-glutamate 5-semialdehyde from L-glutamate: step 1/2. Catalyzes the transfer of a phosphate group to glutamate to form L-glutamate 5-phosphate. In Synechococcus sp. (strain JA-2-3B'a(2-13)) (Cyanobacteria bacterium Yellowstone B-Prime), this protein is Glutamate 5-kinase.